The chain runs to 610 residues: UvrABC system protein C (610 aa).

The GIY-YIG domain maps to 19-97 (GAPGVYKMLD…IKRHKPRYNI (79 aa)). The 36-residue stretch at 207–242 (EALIDRLAQRMEQAAQRLEFEKAARYRDQISNLRTV) folds into the UVR domain.

The protein belongs to the UvrC family. Interacts with UvrB in an incision complex.

The protein localises to the cytoplasm. In terms of biological role, the UvrABC repair system catalyzes the recognition and processing of DNA lesions. UvrC both incises the 5' and 3' sides of the lesion. The N-terminal half is responsible for the 3' incision and the C-terminal half is responsible for the 5' incision. The chain is UvrABC system protein C from Methylococcus capsulatus (strain ATCC 33009 / NCIMB 11132 / Bath).